The sequence spans 278 residues: Probable endonuclease 4 (278 aa).

Zn(2+)-binding residues include His-67, His-107, Glu-141, Asp-173, His-176, His-210, Asp-223, His-225, and Glu-255.

This sequence belongs to the AP endonuclease 2 family. Requires Zn(2+) as cofactor.

The catalysed reaction is Endonucleolytic cleavage to 5'-phosphooligonucleotide end-products.. Functionally, endonuclease IV plays a role in DNA repair. It cleaves phosphodiester bonds at apurinic or apyrimidinic (AP) sites, generating a 3'-hydroxyl group and a 5'-terminal sugar phosphate. The protein is Probable endonuclease 4 of Natronomonas pharaonis (strain ATCC 35678 / DSM 2160 / CIP 103997 / JCM 8858 / NBRC 14720 / NCIMB 2260 / Gabara) (Halobacterium pharaonis).